We begin with the raw amino-acid sequence, 63 residues long: UPF0337 protein Atu0782 (63 aa).

Positions 1–63 (MGSTSDKIAG…DAVKGAVDRM (63 aa)) are disordered. The segment covering 51–63 (KAKDAVKGAVDRM) has biased composition (basic and acidic residues).

It belongs to the UPF0337 (CsbD) family.

This Agrobacterium fabrum (strain C58 / ATCC 33970) (Agrobacterium tumefaciens (strain C58)) protein is UPF0337 protein Atu0782.